A 917-amino-acid chain; its full sequence is Auxin response factor 17 (917 aa).

Positions 134–236 (FCKTLTASDT…QLLLGIRRAN (103 aa)) form a DNA-binding region, TF-B3. The segment at 571 to 649 (SVPNALSPFS…RPTAVPVPDP (79 aa)) is disordered. Low complexity-rich tracts occupy residues 576-594 (LSPFSQLSSPSQSSPMTLQ) and 604-620 (SYPDTSMSSLSPSNTST). The region spanning 786-870 (ATFVKVYKSG…SCIKILSPQE (85 aa)) is the PB1 domain.

Belongs to the ARF family. Homodimers and heterodimers. In terms of tissue distribution, expressed in roots, culms, leaves and young panicles.

The protein localises to the nucleus. Functionally, auxin response factors (ARFs) are transcriptional factors that bind specifically to the DNA sequence 5'-TGTCTC-3' found in the auxin-responsive promoter elements (AuxREs). This is Auxin response factor 17 (ARF17) from Oryza sativa subsp. japonica (Rice).